A 672-amino-acid chain; its full sequence is Single-strand DNA endonuclease ASTE1 (672 aa).

The interaction with SHLD2 stretch occupies residues 349-398; that stretch reads TFLHTQVENMQRPNAHRISQPIRQIIYGLLLNGPSHAEDIAQNTLPSQLL.

The protein belongs to the asteroid family. As to quaternary structure, interacts with SHLD1, SHLD2, SHLD3, RIF1 and MAD2L2/REV7.

Structure-specific DNA endonuclease that specifically cleaves single-stranded DNA and 3' overhang DNA. Contributes to the control of DNA double-strand break repair choice by antagonizing BRCA1-dependent homologous recombination (HR) and promoting non-homologous end-joining (NHEJ). Recruited to the single-stranded DNA ends by SHLD2 and cleaves the 3' exposed DNA ends, therefore inhibiting DNA end resection (necessary for HR) and promoting DNA end protection (necessary for NHEJ). The chain is Single-strand DNA endonuclease ASTE1 (Aste1) from Mus musculus (Mouse).